The following is a 609-amino-acid chain: Oxidoreductase tpcJ (609 aa).

Positions 1–16 are cleaved as a signal peptide; that stretch reads MITVIKWLVSGCCALA. Asparagine 63, asparagine 107, asparagine 113, asparagine 240, asparagine 283, asparagine 471, and asparagine 601 each carry an N-linked (GlcNAc...) asparagine glycan. Plastocyanin-like domains are found at residues 66–186, 196–351, and 429–567; these read VSQQ…HGPS, PWLL…RYDE, and VDWK…EQPK.

This sequence belongs to the multicopper oxidase family. As to expression, specifically expressed in conidia.

The protein operates within secondary metabolite biosynthesis. Functionally, oxidoreductase; part of the gene cluster that mediates the biosynthesis of trypacidin, a mycotoxin with antiprotozoal activity and that plays a role in the infection process. The pathway begins with the synthesis of atrochrysone thioester by the polyketide synthase (PKS) tpcC. The atrochrysone carboxyl ACP thioesterase tpcB then breaks the thioester bond and releases the atrochrysone carboxylic acid from tpcC. The decarboxylase tpcK converts atrochrysone carboxylic acid to atrochrysone which is further reduced into emodin anthrone. The next step is performed by the emodin anthrone oxygenase tpcL that catalyzes the oxidation of emodinanthrone to emodin. Emodin O-methyltransferase encoded by tpcA catalyzes methylation of the 8-hydroxy group of emodin to form questin. Ring cleavage of questin by questin oxidase tpcI leads to desmethylsulochrin via several intermediates including questin epoxide. Another methylation step catalyzed by tpcM leads to the formation of sulochrin which is further converted to monomethylsulfochrin by tpcH. Finally, the tpcJ catalyzes the conversion of monomethylsulfochrin to trypacidin. Trypacidin is toxic for human pulmonary and bronchial epithelial cells by initiating the intracellular formation of nitric oxide (NO) and hydrogen peroxide (H(2)O(2)), thus triggering host necrotic cell death. The trypacidin pathway is also able to produce endocrocin via a distinct route from the endocrocin Enc pathway. This chain is Oxidoreductase tpcJ, found in Aspergillus fumigatus (strain ATCC MYA-4609 / CBS 101355 / FGSC A1100 / Af293) (Neosartorya fumigata).